The primary structure comprises 580 residues: 2-isopropylmalate synthase (580 aa).

Polar residues predominate over residues 1–11 (MSATAFPTLST). Residues 1 to 37 (MSATAFPTLSTPAGEIPATAPAWNRQRRSQMPSHRYR) form a disordered region. The 274-residue stretch at 61 to 334 (PLWVPVDLRD…DPMIDFSDID (274 aa)) folds into the Pyruvate carboxyltransferase domain. Mg(2+) contacts are provided by D70, H273, H275, and N309. Residues 476-580 (EGEADAPQAD…ARAVAEVRPG (105 aa)) are regulatory domain.

It belongs to the alpha-IPM synthase/homocitrate synthase family. LeuA type 2 subfamily. Homodimer. It depends on Mg(2+) as a cofactor.

The protein resides in the cytoplasm. It catalyses the reaction 3-methyl-2-oxobutanoate + acetyl-CoA + H2O = (2S)-2-isopropylmalate + CoA + H(+). Its pathway is amino-acid biosynthesis; L-leucine biosynthesis; L-leucine from 3-methyl-2-oxobutanoate: step 1/4. Functionally, catalyzes the condensation of the acetyl group of acetyl-CoA with 3-methyl-2-oxobutanoate (2-ketoisovalerate) to form 3-carboxy-3-hydroxy-4-methylpentanoate (2-isopropylmalate). The sequence is that of 2-isopropylmalate synthase from Nocardia farcinica (strain IFM 10152).